Reading from the N-terminus, the 77-residue chain is uncharacterized protein (77 aa).

This is an uncharacterized protein from Bos taurus (Bovine).